Reading from the N-terminus, the 191-residue chain is Signal peptidase complex catalytic subunit sec11 (191 aa).

The Cytoplasmic segment spans residues 1 to 18 (MLSFLSSNLSNVRQSLAQ). The chain crosses the membrane as a helical; Signal-anchor for type II membrane protein span at residues 19 to 39 (VLNFALVLSTAFMMWKGLSVF). The Lumenal segment spans residues 40-191 (TASSSPVVVV…MGLMVMLQRE (152 aa)). Residues S53, H92, and D133 each act as charge relay system in the active site. A C-terminal short (CTS) helix region spans residues 177 to 188 (ALLGIMGLMVML).

The protein belongs to the peptidase S26B family. As to quaternary structure, component of the signal peptidase complex (SPC) composed of a catalytic subunit SEC11 and three accessory subunits SPC1, SPC2 and SPC3. The complex induces a local thinning of the ER membrane which is used to measure the length of the signal peptide (SP) h-region of protein substrates. This ensures the selectivity of the complex towards h-regions shorter than 18-20 amino acids. SPC associates with the translocon complex.

The protein resides in the endoplasmic reticulum membrane. The catalysed reaction is Cleavage of hydrophobic, N-terminal signal or leader sequences from secreted and periplasmic proteins.. Functionally, catalytic component of the signal peptidase complex (SPC) which catalyzes the cleavage of N-terminal signal sequences from nascent proteins as they are translocated into the lumen of the endoplasmic reticulum. Specifically cleaves N-terminal signal peptides that contain a hydrophobic alpha-helix (h-region) shorter than 18-20 amino acids. The chain is Signal peptidase complex catalytic subunit sec11 (sec11) from Aspergillus oryzae (strain ATCC 42149 / RIB 40) (Yellow koji mold).